The following is a 1684-amino-acid chain: Protein MON2 homolog (1684 aa).

The protein belongs to the MON2 family.

In terms of biological role, may be required for traffic between late Golgi and early endosomes. The polypeptide is Protein MON2 homolog (mon2) (Drosophila melanogaster (Fruit fly)).